Here is a 237-residue protein sequence, read N- to C-terminus: MGAFTGKTVLILGGSRGIGAAIVRRFVTDGANVRFTYAGSKDAAKRLAQETGATAVFTDSADRDAVIDVVRKSGALDILVVNAGIGVFGEALELNADDIDRLFKINIHAPYHASVEAARQMPEGGRILIIGSVNGDRMPVAGMAAYAASKSALQGMARGLARDFGPRGITINVVQPGPIDTDANPANGPMRDMLHSLMAIKRHGQPEEVAGMVAWLAGPEASFVTGAMHTIDGAFGA.

10-34 (LILGGSRGIGAAIVRRFVTDGANVR) contacts NAD(+). Ser-132 contacts substrate. Tyr-146 (proton acceptor) is an active-site residue.

It belongs to the short-chain dehydrogenases/reductases (SDR) family.

Its function is as follows. Increases biofilm dispersal. Acts by binding directly to the signaling molecule cyclic-di-GMP, which decreases the intracellular concentration of cyclic-di-GMP and leads to biofilm dispersal. Also controls other biofilm-related phenotypes such as cell motility, cell size, cell aggregation and production of extracellular DNA and extracellular polysaccharides (EPS). Does not act as a phosphodiesterase. This is Cyclic-di-GMP-binding biofilm dispersal mediator protein (bdcA) from Escherichia coli (strain K12).